The chain runs to 268 residues: Proenkephalin-A (268 aa).

Positions 1–24 are cleaved as a signal peptide; sequence MARFLRLCTWLLALGSCLLATVQA. Cystine bridges form between C26–C48, C30–C52, and C33–C65. The tract at residues 163–184 is disordered; it reads TGDNRAKDSHQQESTNNDEDMS. 2 propeptides span residues 197 to 208 and 218 to 228; these read SPQLEDEAKELQ and VGRPEWWMDYQ. Phosphoserine is present on S252.

It belongs to the opioid neuropeptide precursor family. Proenkephalin-A is cleaved by CTSL to generate Met-enkephalin. Post-translationally, processed and degraded by ACE. In terms of processing, probably cleaved by ACE. Processed by ACE to generate Met-enkephalin in the nucleus accumbens of the brain. Post-translationally, the N-terminal domain contains 6 conserved cysteines thought to be involved in disulfide bonding and/or processing. As to expression, spermatogenic and somatic cells.

Its subcellular location is the cytoplasmic vesicle. It is found in the secretory vesicle. The protein resides in the chromaffin granule lumen. The protein localises to the secreted. Its function is as follows. Neuropeptide that competes with and mimic the effects of opiate drugs. They play a role in a number of physiologic functions, including pain perception and responses to stress. Functionally, met-enkephalin-Arg-Phe neuropeptide acts as a strong ligand of Mu-type opioid receptor OPRM1. Met-enkephalin-Arg-Phe-binding to OPRM1 in the nucleus accumbens of the brain increases activation of OPRM1, leading to long-term synaptic depression of glutamate release. In terms of biological role, increases glutamate release in the striatum and decreases GABA concentration in the striatum. Increases glutamate release in the striatum. The sequence is that of Proenkephalin-A (Penk) from Mus musculus (Mouse).